Consider the following 199-residue polypeptide: Photosystem II D1 precursor processing protein PSB27-H2, chloroplastic (199 aa).

The protein belongs to the Psb27 family. As to quaternary structure, interacts with the C-terminus of both the precursor and mature form of D1.

Its subcellular location is the plastid. It localises to the chloroplast thylakoid lumen. Functionally, required, but not essential, for D1 (psbA) precursor processing and thus correct photosystem II assembly (PSII). This Arabidopsis thaliana (Mouse-ear cress) protein is Photosystem II D1 precursor processing protein PSB27-H2, chloroplastic (PSB27-2).